Consider the following 181-residue polypeptide: MLAQDNIQINIEPVTTSSSGIPIYHYSPLATAASVGSVEIVEALLSKGADINFGSTPSFITAIKNGHLKICYLLKALGANTQINLPNGEKPLELYKDYLYKFYDELYEFKQTIQDRAGAYYGYDKNKPLNIKDLEIWYTKLVIWDFKAFSRKAHTMKEIEELSEYEQNLFPEITDSVNIIG.

ANK repeat units lie at residues 24-53 (YHYSPLATAASVGSVEIVEALLSKGADINF) and 54-83 (GSTPSFITAIKNGHLKICYLLKALGANTQI).

The polypeptide is Putative ankyrin repeat protein RF_0782 (Rickettsia felis (strain ATCC VR-1525 / URRWXCal2) (Rickettsia azadi)).